The chain runs to 291 residues: 4-hydroxy-tetrahydrodipicolinate synthase (291 aa).

Position 45 (T45) interacts with pyruvate. Y133 acts as the Proton donor/acceptor in catalysis. The Schiff-base intermediate with substrate role is filled by K161. I203 is a pyruvate binding site.

This sequence belongs to the DapA family. As to quaternary structure, homotetramer; dimer of dimers.

The protein resides in the cytoplasm. It carries out the reaction L-aspartate 4-semialdehyde + pyruvate = (2S,4S)-4-hydroxy-2,3,4,5-tetrahydrodipicolinate + H2O + H(+). It participates in amino-acid biosynthesis; L-lysine biosynthesis via DAP pathway; (S)-tetrahydrodipicolinate from L-aspartate: step 3/4. In terms of biological role, catalyzes the condensation of (S)-aspartate-beta-semialdehyde [(S)-ASA] and pyruvate to 4-hydroxy-tetrahydrodipicolinate (HTPA). This chain is 4-hydroxy-tetrahydrodipicolinate synthase, found in Neisseria meningitidis serogroup C (strain 053442).